Reading from the N-terminus, the 123-residue chain is Small ribosomal subunit protein uS12 (123 aa).

Residue aspartate 89 is modified to 3-methylthioaspartic acid.

The protein belongs to the universal ribosomal protein uS12 family. As to quaternary structure, part of the 30S ribosomal subunit. Contacts proteins S8 and S17. May interact with IF1 in the 30S initiation complex.

Functionally, with S4 and S5 plays an important role in translational accuracy. Its function is as follows. Interacts with and stabilizes bases of the 16S rRNA that are involved in tRNA selection in the A site and with the mRNA backbone. Located at the interface of the 30S and 50S subunits, it traverses the body of the 30S subunit contacting proteins on the other side and probably holding the rRNA structure together. The combined cluster of proteins S8, S12 and S17 appears to hold together the shoulder and platform of the 30S subunit. In Maridesulfovibrio salexigens (strain ATCC 14822 / DSM 2638 / NCIMB 8403 / VKM B-1763) (Desulfovibrio salexigens), this protein is Small ribosomal subunit protein uS12.